A 121-amino-acid chain; its full sequence is Fluoride-specific ion channel FluC 3 (121 aa).

4 helical membrane-spanning segments follow: residues 3–23 (VFLP…RYLL), 40–60 (FTIN…ALGG), 69–89 (VLAT…NEMV), and 101–121 (AAYL…GFLV). Glycine 76 and serine 79 together coordinate Na(+).

Belongs to the fluoride channel Fluc/FEX (TC 1.A.43) family.

It localises to the cell membrane. It carries out the reaction fluoride(in) = fluoride(out). With respect to regulation, na(+) is not transported, but it plays an essential structural role and its presence is essential for fluoride channel function. Its function is as follows. Fluoride-specific ion channel. Important for reducing fluoride concentration in the cell, thus reducing its toxicity. The chain is Fluoride-specific ion channel FluC 3 from Bifidobacterium longum (strain NCC 2705).